Reading from the N-terminus, the 531-residue chain is Jacalin-related lectin 16 (531 aa).

4 consecutive Jacalin-type lectin domains span residues 1-87 (MDRS…YFTW), 90-232 (PTKM…YFTT), 235-378 (LISL…YFRP), and 385-528 (TEKV…NVLP).

Belongs to the jacalin lectin family.

This is Jacalin-related lectin 16 (JAL16) from Arabidopsis thaliana (Mouse-ear cress).